We begin with the raw amino-acid sequence, 576 residues long: Mycobactin import ATP-binding/permease protein IrtB (576 aa).

The Cytoplasmic segment spans residues 1–25 (MIRTLIALVPADKRGTLGLYTVLTV). The region spanning 19–299 (LYTVLTVLSV…LSELTPAIES (281 aa)) is the ABC transmembrane type-1 domain. The helical transmembrane segment at 26 to 46 (LSVVIRAAGTVLLVPLVAALF) threads the bilayer. The Periplasmic segment spans residues 47 to 52 (GDTPQD). A helical membrane pass occupies residues 53 to 73 (AWPWLGWLTAATAAGWIVDTT). Residues 74-131 (TSRLGFDLGFAVLDHTQHDVADRMPNIRLDWLTAENTATARAAIASTGPELVGLVVNL) are Cytoplasmic-facing. 2 consecutive transmembrane segments (helical) span residues 132–152 (LTPL…LVAV) and 153–173 (SPPL…AMWA). The Cytoplasmic segment spans residues 174-241 (SNRLSRKADT…RLLAMQIPGQ (68 aa)). The chain crosses the membrane as a helical span at residues 242-262 (LLFSLASQLALILLAGMATWL). The Periplasmic portion of the chain corresponds to 263–267 (TVRGE). The helical transmembrane segment at 268–288 (LSVPEAVAMIVVVARYLEPFT) threads the bilayer. The Cytoplasmic portion of the chain corresponds to 289–576 (SLSELTPAIE…HEAADWQITH (288 aa)). In terms of domain architecture, ABC transporter spans 332–565 (IEFDCVTFGY…GGRFDEFWRR (234 aa)). 364 to 371 (GPSGSGKS) lines the ATP pocket.

Belongs to the ABC transporter superfamily. Siderophore-Fe(3+) uptake transporter (SIUT) (TC 3.A.1.21) family. In terms of assembly, forms a heterodimer with IrtA.

It localises to the cell inner membrane. Part of the ABC transporter complex IrtAB involved in the import of iron-bound mycobactin (Fe-MBT) and carboxymycobactin (Fe-cMBT). Has a preference for Fe-MBT over Fe-cMBT. Transmembrane domains (TMD) form a pore in the membrane and the ATP-binding domain (NBD) is responsible for energy generation. The polypeptide is Mycobactin import ATP-binding/permease protein IrtB (Mycolicibacterium smegmatis (strain ATCC 700084 / mc(2)155) (Mycobacterium smegmatis)).